A 68-amino-acid chain; its full sequence is Large ribosomal subunit protein bL35 (68 aa).

This sequence belongs to the bacterial ribosomal protein bL35 family.

The polypeptide is Large ribosomal subunit protein bL35 (Onion yellows phytoplasma (strain OY-M)).